The primary structure comprises 147 residues: S-protein homolog 10 (147 aa).

The signal sequence occupies residues 1-20; it reads MNCFSYFFLVIILCAGLNNA.

Belongs to the plant self-incompatibility (S1) protein family.

It is found in the secreted. The protein is S-protein homolog 10 of Arabidopsis thaliana (Mouse-ear cress).